We begin with the raw amino-acid sequence, 452 residues long: GPI mannosyltransferase 2 (452 aa).

Over 1–7 the chain is Cytoplasmic; that stretch reads MMEKVTK. Residues 8-28 traverse the membrane as a helical segment; the sequence is LALTSRVMVLVVQLLANFATP. The Lumenal segment spans residues 29 to 113; that stretch reads DHKPDVFRMP…HLGIPLSRDA (85 aa). A helical membrane pass occupies residues 114 to 134; that stretch reads LILLVAVALNVLIFCKTANVL. Residues 135–161 lie on the Cytoplasmic side of the membrane; it reads YKLTQRMFNDHNKSWNAALIFCFNPAS. A helical transmembrane segment spans residues 162–182; the sequence is IFFSAAYSETFFAFASFSLML. Over 183 to 209 the chain is Lumenal; sequence ECMRSEKDFRTFRLGAALTGCFVCRSN. Residues 210–230 traverse the membrane as a helical segment; that stretch reads GLLTLGFPLYFLARHILLSTG. The Cytoplasmic segment spans residues 231 to 238; the sequence is SVQRCWQL. The helical transmembrane segment at 239–259 threads the bilayer; the sequence is FKMGLAMLVALGILHTYYFYI. At 260 to 284 the chain is on the lumenal side; it reads YRLYCLPDVKVQHAQHVVDYAKERS. The helical transmembrane segment at 285 to 305 threads the bilayer; that stretch reads FLISGQASVGSPWCGYTLPFP. Residues 306–327 are Cytoplasmic-facing; that stretch reads YTYVQSHYWDVGFLRYYKWKQL. A helical transmembrane segment spans residues 328–348; that stretch reads PNFLLALPMLLFMHWHCYDYI. Topologically, residues 349–370 are lumenal; sequence RKLVANTWSKISPSEYQGILKE. The helical transmembrane segment at 371–391 threads the bilayer; the sequence is HISFPFVLHAAVLTLVCTLYV. Over 392-398 the chain is Cytoplasmic; that stretch reads HIQVSTR. Residues 399 to 419 form a helical membrane-spanning segment; the sequence is LLASATPVFYWFAADYMPNTF. Residues 420–426 are Lumenal-facing; sequence QLSFRSK. Residues 427–447 traverse the membrane as a helical segment; sequence AGVLFIWCLTYSLVGTVLFSN. Topologically, residues 448–452 are cytoplasmic; the sequence is NYPWT.

It belongs to the PIGV family.

The protein resides in the endoplasmic reticulum membrane. It participates in glycolipid biosynthesis; glycosylphosphatidylinositol-anchor biosynthesis. In terms of biological role, mannosyltransferase involved in glycosylphosphatidylinositol-anchor biosynthesis. Transfers the second mannose to the glycosylphosphatidylinositol during GPI precursor assembly. Required for the GPI-mediated endoplasmic reticulum exit and proper targeting to the cell surface of chp. Required for GPI-mediated membrane attachment of chp, qsm and Cont. Essential for microvillar stability in the rhabdomere. This chain is GPI mannosyltransferase 2, found in Drosophila pseudoobscura pseudoobscura (Fruit fly).